Here is a 354-residue protein sequence, read N- to C-terminus: Rhodopsin (354 aa).

The Extracellular segment spans residues 1-36; the sequence is MNGTEGPYFYVPMVNTTGIVRSPYEYPQYYLVSPAA. N-linked (GlcNAc...) asparagine glycans are attached at residues Asn-2 and Asn-15. Residues 37–61 traverse the membrane as a helical segment; it reads YACLGAYMFFLILVGFPVNFLTLYV. Over 62–73 the chain is Cytoplasmic; that stretch reads TIEHKKLRTPLN. Residues 74 to 96 form a helical membrane-spanning segment; the sequence is YILLNLAVADLFMVFGGFTTTIY. Over 97 to 110 the chain is Extracellular; it reads TSMHGYFVLGRLGC. The cysteines at positions 110 and 187 are disulfide-linked. A helical transmembrane segment spans residues 111–133; sequence NLEGYFATLGGEIGLWSLVVLAV. Positions 134–136 match the 'Ionic lock' involved in activated form stabilization motif; it reads ERW. At 134 to 152 the chain is on the cytoplasmic side; sequence ERWLVVCKPISNFRFTENH. Residues 153–173 form a helical membrane-spanning segment; the sequence is AIMGLVFTWIMANACAAPPLL. Over 174-202 the chain is Extracellular; it reads GWSRYIPEGMQCSCGVDYYTRAEGFNNES. A helical membrane pass occupies residues 203–224; sequence FVIYMFICHFCIPLVVVFFCYG. At 225–252 the chain is on the cytoplasmic side; the sequence is RLLCAVKEAAAAQQESETTQRAEREVTR. Residues 253–274 form a helical membrane-spanning segment; sequence MVVILVIGFLVCWTPYASVAWY. Residues 275–286 are Extracellular-facing; sequence IFSNQGSEFGPL. The helical transmembrane segment at 287 to 308 threads the bilayer; the sequence is FMTIPAFFAKSSSIYNPMIYIC. Lys-296 carries the post-translational modification N6-(retinylidene)lysine. At 309–354 the chain is on the cytoplasmic side; the sequence is MNKQFRHCMITTLCCGKNPFEEEEGASTTASKTEASSVSSSSVSPA. S-palmitoyl cysteine attachment occurs at residues Cys-322 and Cys-323. Positions 333–354 are disordered; sequence GASTTASKTEASSVSSSSVSPA. Over residues 334–354 the composition is skewed to low complexity; that stretch reads ASTTASKTEASSVSSSSVSPA.

This sequence belongs to the G-protein coupled receptor 1 family. Opsin subfamily. Phosphorylated on some or all of the serine and threonine residues present in the C-terminal region. Post-translationally, contains one covalently linked retinal chromophore.

Its subcellular location is the membrane. It localises to the cell projection. The protein localises to the cilium. It is found in the photoreceptor outer segment. Photoreceptor required for image-forming vision at low light intensity. While most salt water fish species use retinal as chromophore, most freshwater fish use 3-dehydroretinal, or a mixture of retinal and 3-dehydroretinal. Light-induced isomerization of 11-cis to all-trans retinal triggers a conformational change that activates signaling via G-proteins. Subsequent receptor phosphorylation mediates displacement of the bound G-protein alpha subunit by arrestin and terminates signaling. The protein is Rhodopsin (rho) of Gambusia affinis (Western mosquitofish).